We begin with the raw amino-acid sequence, 355 residues long: Peptide chain release factor 1 (355 aa).

Residue glutamine 233 is modified to N5-methylglutamine.

The protein belongs to the prokaryotic/mitochondrial release factor family. Post-translationally, methylated by PrmC. Methylation increases the termination efficiency of RF1.

The protein localises to the cytoplasm. Functionally, peptide chain release factor 1 directs the termination of translation in response to the peptide chain termination codons UAG and UAA. This is Peptide chain release factor 1 from Dehalococcoides mccartyi (strain ATCC BAA-2100 / JCM 16839 / KCTC 5957 / BAV1).